The chain runs to 495 residues: ATP synthase subunit beta, chloroplastic (495 aa).

Residue 172-179 (GGAGVGKT) coordinates ATP.

It belongs to the ATPase alpha/beta chains family. F-type ATPases have 2 components, CF(1) - the catalytic core - and CF(0) - the membrane proton channel. CF(1) has five subunits: alpha(3), beta(3), gamma(1), delta(1), epsilon(1). CF(0) has four main subunits: a(1), b(1), b'(1) and c(9-12).

It localises to the plastid. Its subcellular location is the chloroplast thylakoid membrane. The enzyme catalyses ATP + H2O + 4 H(+)(in) = ADP + phosphate + 5 H(+)(out). Functionally, produces ATP from ADP in the presence of a proton gradient across the membrane. The catalytic sites are hosted primarily by the beta subunits. The sequence is that of ATP synthase subunit beta, chloroplastic from Hyacinthoides non-scripta (English bluebell).